Here is a 962-residue protein sequence, read N- to C-terminus: Protein lin-36 (962 aa).

Disordered stretches follow at residues Met1–Gly53 and Thr74–Glu99. The segment covering Asp23 to Glu40 has biased composition (basic and acidic residues). Polar residues predominate over residues Thr74–Gln95. The segment at Leu161–Ile249 adopts a THAP-type zinc-finger fold. Basic and acidic residues-rich tracts occupy residues Lys452 to Glu472 and Ser534 to Phe570. 4 disordered regions span residues Lys452–Gln575, Ile612–Arg676, Gln744–Ser788, and Asp932–Gln962. The segment covering Ser626 to Gln637 has biased composition (low complexity). Residues Lys647 to Lys658 show a composition bias toward basic and acidic residues. The segment covering Gln939–Gln951 has biased composition (low complexity). Residues Phe952–Gln962 are compositionally biased toward polar residues.

In terms of tissue distribution, expressed in vulval precursor P(3-8).p cells and their descendants, neurons of the head, tail and ventral cord, hypodermal and intestinal cells and germline cells.

The protein resides in the nucleus. Required to negatively regulate vulval development. Antagonizes Ras-mediated vulval induction. Acts cell autonomously. The protein is Protein lin-36 (lin-36) of Caenorhabditis elegans.